Reading from the N-terminus, the 243-residue chain is UPF0758 protein PCC7424_2073 (243 aa).

One can recognise an MPN domain in the interval 112–235 (VEINDPVSAV…HQSLRTVTDL (124 aa)). Zn(2+) is bound by residues H184, H186, and D197. Positions 184–197 (HNHPSGNVAPSQED) match the JAMM motif motif.

Belongs to the UPF0758 family.

This is UPF0758 protein PCC7424_2073 from Gloeothece citriformis (strain PCC 7424) (Cyanothece sp. (strain PCC 7424)).